Here is a 77-residue protein sequence, read N- to C-terminus: Defensin-like protein 4 (77 aa).

The first 30 residues, 1–30 (MKFSMRLISAVLFLVMIFVATGMGPVTVEA), serve as a signal peptide directing secretion. Intrachain disulfides connect Cys-33/Cys-77, Cys-44/Cys-64, Cys-50/Cys-71, and Cys-54/Cys-73.

It belongs to the DEFL family. In terms of tissue distribution, expressed in roots, siliques and seeds.

It localises to the secreted. Functionally, confers broad-spectrum resistance to pathogens. The chain is Defensin-like protein 4 (PDF2.1) from Arabidopsis thaliana (Mouse-ear cress).